The primary structure comprises 361 residues: Putative F-box protein At3g18340 (361 aa).

The F-box domain maps to 1–46; sequence MASGKLPWELEEEILCRLPPGSLVRLRSVCKHWNDLYNDKWFIKKS.

In Arabidopsis thaliana (Mouse-ear cress), this protein is Putative F-box protein At3g18340.